We begin with the raw amino-acid sequence, 251 residues long: Triosephosphate isomerase (251 aa).

A substrate-binding site is contributed by Asn-9–Lys-11. His-95 functions as the Electrophile in the catalytic mechanism. Catalysis depends on Glu-167, which acts as the Proton acceptor. Substrate-binding positions include Gly-173, Ser-213, and Gly-234–Gly-235.

The protein belongs to the triosephosphate isomerase family. As to quaternary structure, homodimer.

The protein resides in the cytoplasm. It carries out the reaction D-glyceraldehyde 3-phosphate = dihydroxyacetone phosphate. Its pathway is carbohydrate biosynthesis; gluconeogenesis. It participates in carbohydrate degradation; glycolysis; D-glyceraldehyde 3-phosphate from glycerone phosphate: step 1/1. Functionally, involved in the gluconeogenesis. Catalyzes stereospecifically the conversion of dihydroxyacetone phosphate (DHAP) to D-glyceraldehyde-3-phosphate (G3P). This Enterococcus faecalis (strain ATCC 700802 / V583) protein is Triosephosphate isomerase.